The primary structure comprises 545 residues: ATP synthase subunit alpha (545 aa).

173–180 lines the ATP pocket; sequence GDRQTGKS.

The protein belongs to the ATPase alpha/beta chains family. In terms of assembly, F-type ATPases have 2 components, CF(1) - the catalytic core - and CF(0) - the membrane proton channel. CF(1) has five subunits: alpha(3), beta(3), gamma(1), delta(1), epsilon(1). CF(0) has three main subunits: a(1), b(2) and c(9-12). The alpha and beta chains form an alternating ring which encloses part of the gamma chain. CF(1) is attached to CF(0) by a central stalk formed by the gamma and epsilon chains, while a peripheral stalk is formed by the delta and b chains.

Its subcellular location is the cell membrane. The enzyme catalyses ATP + H2O + 4 H(+)(in) = ADP + phosphate + 5 H(+)(out). In terms of biological role, produces ATP from ADP in the presence of a proton gradient across the membrane. The alpha chain is a regulatory subunit. This chain is ATP synthase subunit alpha, found in Pseudarthrobacter chlorophenolicus (strain ATCC 700700 / DSM 12829 / CIP 107037 / JCM 12360 / KCTC 9906 / NCIMB 13794 / A6) (Arthrobacter chlorophenolicus).